The following is a 322-amino-acid chain: Deoxyhypusine hydroxylase (322 aa).

HEAT-like PBS-type repeat units lie at residues 76–102 (LKHEVAYVLGQTKNMAGAPLLRDVLAD) and 109–135 (VRHEAAEALGALNDVDSLDILEKYFKE). Fe cation is bound by residues His-78, Glu-79, His-111, Glu-112, His-236, Glu-237, His-269, and Glu-270. The stretch at 267 to 293 (VRHEAAEALGSIATDDVLPVLKEHLKD) is one HEAT-like PBS-type 3 repeat.

The protein belongs to the deoxyhypusine hydroxylase family. Requires Fe(2+) as cofactor.

The protein localises to the cytoplasm. It localises to the nucleus. The catalysed reaction is [eIF5A protein]-deoxyhypusine + AH2 + O2 = [eIF5A protein]-hypusine + A + H2O. It participates in protein modification; eIF5A hypusination. Functionally, catalyzes the hydroxylation of the N(6)-(4-aminobutyl)-L-lysine intermediate to form hypusine, an essential post-translational modification only found in mature eIF-5A factor. This Kluyveromyces lactis (strain ATCC 8585 / CBS 2359 / DSM 70799 / NBRC 1267 / NRRL Y-1140 / WM37) (Yeast) protein is Deoxyhypusine hydroxylase.